A 666-amino-acid chain; its full sequence is tRNA 5-methylaminomethyl-2-thiouridine biosynthesis bifunctional protein MnmC (666 aa).

A tRNA (mnm(5)s(2)U34)-methyltransferase region spans residues 1 to 253 (MSSPFAPIIT…KRHMLCAYYE (253 aa)). An FAD-dependent cmnm(5)s(2)U34 oxidoreductase region spans residues 283–666 (VGGGLAGCFI…FLRKKIIQGP (384 aa)).

This sequence in the N-terminal section; belongs to the methyltransferase superfamily. tRNA (mnm(5)s(2)U34)-methyltransferase family. In the C-terminal section; belongs to the DAO family. Requires FAD as cofactor.

The protein localises to the cytoplasm. It catalyses the reaction 5-aminomethyl-2-thiouridine(34) in tRNA + S-adenosyl-L-methionine = 5-methylaminomethyl-2-thiouridine(34) in tRNA + S-adenosyl-L-homocysteine + H(+). Its function is as follows. Catalyzes the last two steps in the biosynthesis of 5-methylaminomethyl-2-thiouridine (mnm(5)s(2)U) at the wobble position (U34) in tRNA. Catalyzes the FAD-dependent demodification of cmnm(5)s(2)U34 to nm(5)s(2)U34, followed by the transfer of a methyl group from S-adenosyl-L-methionine to nm(5)s(2)U34, to form mnm(5)s(2)U34. This Legionella pneumophila (strain Corby) protein is tRNA 5-methylaminomethyl-2-thiouridine biosynthesis bifunctional protein MnmC.